Consider the following 363-residue polypeptide: 3-dehydroquinate synthase (363 aa).

NAD(+) contacts are provided by residues 134–135, K147, K156, and 174–177; these read TT and TLKT. Zn(2+)-binding residues include E189, H254, and H271.

This sequence belongs to the sugar phosphate cyclases superfamily. Dehydroquinate synthase family. It depends on Co(2+) as a cofactor. Zn(2+) is required as a cofactor. Requires NAD(+) as cofactor.

The protein resides in the cytoplasm. The enzyme catalyses 7-phospho-2-dehydro-3-deoxy-D-arabino-heptonate = 3-dehydroquinate + phosphate. Its pathway is metabolic intermediate biosynthesis; chorismate biosynthesis; chorismate from D-erythrose 4-phosphate and phosphoenolpyruvate: step 2/7. In terms of biological role, catalyzes the conversion of 3-deoxy-D-arabino-heptulosonate 7-phosphate (DAHP) to dehydroquinate (DHQ). The chain is 3-dehydroquinate synthase from Prochlorococcus marinus (strain MIT 9515).